A 954-amino-acid chain; its full sequence is Bifunctional glutamine synthetase adenylyltransferase/adenylyl-removing enzyme (954 aa).

The tract at residues 1 to 452 is adenylyl removase; the sequence is MAVQKDSNKS…HFKATVGGEE (452 aa). An adenylyl transferase region spans residues 458–954; the sequence is EHWTAQLWNV…ILAIYQAILE (497 aa).

This sequence belongs to the GlnE family. Requires Mg(2+) as cofactor.

It catalyses the reaction [glutamine synthetase]-O(4)-(5'-adenylyl)-L-tyrosine + phosphate = [glutamine synthetase]-L-tyrosine + ADP. It carries out the reaction [glutamine synthetase]-L-tyrosine + ATP = [glutamine synthetase]-O(4)-(5'-adenylyl)-L-tyrosine + diphosphate. Involved in the regulation of glutamine synthetase GlnA, a key enzyme in the process to assimilate ammonia. When cellular nitrogen levels are high, the C-terminal adenylyl transferase (AT) inactivates GlnA by covalent transfer of an adenylyl group from ATP to specific tyrosine residue of GlnA, thus reducing its activity. Conversely, when nitrogen levels are low, the N-terminal adenylyl removase (AR) activates GlnA by removing the adenylyl group by phosphorolysis, increasing its activity. The regulatory region of GlnE binds the signal transduction protein PII (GlnB) which indicates the nitrogen status of the cell. The polypeptide is Bifunctional glutamine synthetase adenylyltransferase/adenylyl-removing enzyme (Shewanella oneidensis (strain ATCC 700550 / JCM 31522 / CIP 106686 / LMG 19005 / NCIMB 14063 / MR-1)).